A 155-amino-acid polypeptide reads, in one-letter code: Acyl-CoA-binding domain-containing protein 3 (155 aa).

Positions L3–A88 constitute an ACB domain. An acyl-CoA contacts are provided by residues K15, Y30–K34, K56, and Y75.

This sequence belongs to the ACBP family. Highly expressed in leaves. Expressed at low levels in roots and seeds.

It localises to the cytoplasm. The protein resides in the cytosol. Binds medium- and long-chain acyl-CoA esters with high affinity. Can interact in vitro with linolenoyl-CoA. Binds phosphatidic acid (PA) and phosphatidylcholine (PC) in vitro. May play a role in the biosynthesis of phospholipids. The sequence is that of Acyl-CoA-binding domain-containing protein 3 from Oryza sativa subsp. japonica (Rice).